The chain runs to 433 residues: Inositol hexakisphosphate kinase 1 (433 aa).

The disordered stretch occupies residues 100–160 (ETVEQDDTPE…SPKVELHSHS (61 aa)). Residues 113–123 (PRRKHSRRSLH) are compositionally biased toward basic residues. Residues 139-149 (SFETSESSQEA) show a composition bias toward polar residues. Over residues 150–160 (KSPKVELHSHS) the composition is skewed to basic and acidic residues. Ser-151 bears the Phosphoserine mark. 220–228 (PCVLDLKMG) is a binding site for substrate. The interval 359-383 (EVPPPCGPSTSPSSTSLEAGPSSPP) is disordered.

This sequence belongs to the inositol phosphokinase (IPK) family. Highly expressed in brain and testis. Detected at much lower levels in heart, kidney, liver, lung and spleen.

Its subcellular location is the cytoplasm. It is found in the nucleus. The enzyme catalyses 1D-myo-inositol hexakisphosphate + ATP = 5-diphospho-1D-myo-inositol 1,2,3,4,6-pentakisphosphate + ADP. The catalysed reaction is 1-diphospho-1D-myo-inositol 2,3,4,5,6-pentakisphosphate + ATP + H(+) = 1,5-bis(diphospho)-1D-myo-inositol 2,3,4,6-tetrakisphosphate + ADP. Its function is as follows. Converts inositol hexakisphosphate (InsP6) to diphosphoinositol pentakisphosphate (InsP7/PP-InsP5). Converts 1,3,4,5,6-pentakisphosphate (InsP5) to PP-InsP4. In Mus musculus (Mouse), this protein is Inositol hexakisphosphate kinase 1 (Ip6k1).